We begin with the raw amino-acid sequence, 56 residues long: Large ribosomal subunit protein bL32 (56 aa).

The disordered stretch occupies residues 1–38 (MAVQQNKKSRSKRGMRRSHDSLSTAQLSVDATSGELHR). The segment covering 7–16 (KKSRSKRGMR) has biased composition (basic residues). The segment covering 21 to 31 (SLSTAQLSVDA) has biased composition (polar residues).

This sequence belongs to the bacterial ribosomal protein bL32 family.

The chain is Large ribosomal subunit protein bL32 from Shewanella woodyi (strain ATCC 51908 / MS32).